A 686-amino-acid polypeptide reads, in one-letter code: Methionine--tRNA ligase (686 aa).

The 'HIGH' region motif lies at 15–25; sequence PYANGSIHLGH. Cys146, Cys149, Cys159, and Cys162 together coordinate Zn(2+). The 'KMSKS' region signature appears at 332-336; it reads KMSKS. Lys335 serves as a coordination point for ATP. Residues 585–686 form the tRNA-binding domain; it reads AFAAVDMRIA…EGAQPGMRVM (102 aa).

The protein belongs to the class-I aminoacyl-tRNA synthetase family. MetG type 1 subfamily. As to quaternary structure, homodimer. The cofactor is Zn(2+).

It localises to the cytoplasm. It carries out the reaction tRNA(Met) + L-methionine + ATP = L-methionyl-tRNA(Met) + AMP + diphosphate. Its function is as follows. Is required not only for elongation of protein synthesis but also for the initiation of all mRNA translation through initiator tRNA(fMet) aminoacylation. This chain is Methionine--tRNA ligase, found in Vibrio campbellii (strain ATCC BAA-1116).